Reading from the N-terminus, the 95-residue chain is Defensin (95 aa).

The signal sequence occupies residues 1-17; the sequence is MKNYVFALLVVTAVAIA. The propeptide occupies 18–55; that stretch reads LPNEDKNAPMRVHLLPQKEDESLKLEVTPVKEHHRTRR. 3 cysteine pairs are disulfide-bonded: Cys58–Cys85, Cys71–Cys91, and Cys75–Cys93.

Belongs to the invertebrate defensin family. Type 1 subfamily.

It is found in the secreted. Its function is as follows. Antibacterial peptide mostly active against Gram-positive bacteria. This Formica aquilonia (Red wood ant) protein is Defensin.